The following is a 355-amino-acid chain: 3-dehydroquinate synthase (355 aa).

NAD(+)-binding positions include 105-109 (GVVGD), 129-130 (TS), Lys-142, Lys-151, and 169-172 (TLKT). Zn(2+) is bound by residues Glu-184, His-246, and His-263.

This sequence belongs to the sugar phosphate cyclases superfamily. Dehydroquinate synthase family. It depends on NAD(+) as a cofactor. Co(2+) is required as a cofactor. The cofactor is Zn(2+).

The protein localises to the cytoplasm. The catalysed reaction is 7-phospho-2-dehydro-3-deoxy-D-arabino-heptonate = 3-dehydroquinate + phosphate. Its pathway is metabolic intermediate biosynthesis; chorismate biosynthesis; chorismate from D-erythrose 4-phosphate and phosphoenolpyruvate: step 2/7. Functionally, catalyzes the conversion of 3-deoxy-D-arabino-heptulosonate 7-phosphate (DAHP) to dehydroquinate (DHQ). The polypeptide is 3-dehydroquinate synthase (Streptococcus agalactiae serotype III (strain NEM316)).